The chain runs to 167 residues: Ammonium/H(+) antiporter subunit AmhM (167 aa).

In terms of domain architecture, RCK C-terminal spans 79-163 (IDRIKLIRKQ…IQKFEELCAC (85 aa)).

In terms of assembly, interacts with AmhT.

Its subcellular location is the cell membrane. Its function is as follows. Modulates the activity of the ammonium/proton antiporter AmhT. The polypeptide is Ammonium/H(+) antiporter subunit AmhM (amhM) (Alkalihalophilus pseudofirmus (strain ATCC BAA-2126 / JCM 17055 / OF4) (Bacillus pseudofirmus)).